The primary structure comprises 99 residues: DNA-directed RNA polymerase subunit omega (99 aa).

Belongs to the RNA polymerase subunit omega family. The RNAP catalytic core consists of 2 alpha, 1 beta, 1 beta' and 1 omega subunit. When a sigma factor is associated with the core the holoenzyme is formed, which can initiate transcription.

The catalysed reaction is RNA(n) + a ribonucleoside 5'-triphosphate = RNA(n+1) + diphosphate. Functionally, promotes RNA polymerase assembly. Latches the N- and C-terminal regions of the beta' subunit thereby facilitating its interaction with the beta and alpha subunits. This is DNA-directed RNA polymerase subunit omega from Stenotrophomonas maltophilia (strain K279a).